Here is a 464-residue protein sequence, read N- to C-terminus: Siroheme synthase (464 aa).

Residues methionine 1–leucine 203 are precorrin-2 dehydrogenase /sirohydrochlorin ferrochelatase. NAD(+) is bound by residues glutamate 22–isoleucine 23 and proline 43–glutamate 44. At serine 128 the chain carries Phosphoserine. The tract at residues glycine 216–glutamine 464 is uroporphyrinogen-III C-methyltransferase. Proline 225 contributes to the S-adenosyl-L-methionine binding site. The Proton acceptor role is filled by aspartate 248. Catalysis depends on lysine 270, which acts as the Proton donor. S-adenosyl-L-methionine-binding positions include glycine 301–aspartate 303, isoleucine 306, threonine 331–alanine 332, methionine 383, and glycine 412.

In the N-terminal section; belongs to the precorrin-2 dehydrogenase / sirohydrochlorin ferrochelatase family. It in the C-terminal section; belongs to the precorrin methyltransferase family.

The enzyme catalyses uroporphyrinogen III + 2 S-adenosyl-L-methionine = precorrin-2 + 2 S-adenosyl-L-homocysteine + H(+). It carries out the reaction precorrin-2 + NAD(+) = sirohydrochlorin + NADH + 2 H(+). The catalysed reaction is siroheme + 2 H(+) = sirohydrochlorin + Fe(2+). It participates in cofactor biosynthesis; adenosylcobalamin biosynthesis; precorrin-2 from uroporphyrinogen III: step 1/1. Its pathway is cofactor biosynthesis; adenosylcobalamin biosynthesis; sirohydrochlorin from precorrin-2: step 1/1. The protein operates within porphyrin-containing compound metabolism; siroheme biosynthesis; precorrin-2 from uroporphyrinogen III: step 1/1. It functions in the pathway porphyrin-containing compound metabolism; siroheme biosynthesis; siroheme from sirohydrochlorin: step 1/1. It participates in porphyrin-containing compound metabolism; siroheme biosynthesis; sirohydrochlorin from precorrin-2: step 1/1. In terms of biological role, multifunctional enzyme that catalyzes the SAM-dependent methylations of uroporphyrinogen III at position C-2 and C-7 to form precorrin-2 via precorrin-1. Then it catalyzes the NAD-dependent ring dehydrogenation of precorrin-2 to yield sirohydrochlorin. Finally, it catalyzes the ferrochelation of sirohydrochlorin to yield siroheme. The chain is Siroheme synthase from Pseudomonas putida (strain W619).